The chain runs to 549 residues: Leucine-rich repeat, immunoglobulin-like domain and transmembrane domain-containing protein 2 (549 aa).

A signal peptide spans 1 to 22 (MAFVFYCFLQVLVSWVIHAVQP). The region spanning 23-54 (FCLPECTCSEESFGRSLQCMSMSLGKIPDNFP) is the LRRNT domain. 4 LRR repeats span residues 80–103 (SLEY…EDLP), 104–125 (ELRE…AFRA), 128–149 (LLRV…ALQF), and 152–173 (NLIY…VFLN). N-linked (GlcNAc...) asparagine glycosylation occurs at Asn-90. In terms of domain architecture, LRRCT spans 200-252 (NPWLCDCRLRGLAQFVKSVGPPFILVNSYLVCQGPVSKAGQLLHETELGVCMK). Residues 253-339 (PTISTPSVNV…FNSIGRSSLV (87 aa)) form the Ig-like domain. Asn-261 carries N-linked (GlcNAc...) asparagine glycosylation. The cysteines at positions 274 and 327 are disulfide-linked. The region spanning 361–447 (EVSAYVDLRV…QPPSQGQCVV (87 aa)) is the Fibronectin type-III domain. The helical transmembrane segment at 463–483 (LLHVTVVLCAVLLALPVGAYV) threads the bilayer. The N-linked (GlcNAc...) asparagine glycan is linked to Asn-491. The segment at 521–549 (FKDPSGVYEDGESHRVMEEDEEVEKEGIS) is disordered. Residues 538 to 549 (EEDEEVEKEGIS) show a composition bias toward acidic residues.

In terms of assembly, interacts with LRIT1; may form a heterodimer with LRIT1.

The protein localises to the membrane. The sequence is that of Leucine-rich repeat, immunoglobulin-like domain and transmembrane domain-containing protein 2 (Lrit2) from Mus musculus (Mouse).